A 315-amino-acid polypeptide reads, in one-letter code: Small ribosomal subunit protein uS2 (315 aa).

Positions 250–315 are disordered; that stretch reads LLEQGDAAKA…TESEKAPVSE (66 aa). Composition is skewed to basic and acidic residues over residues 272–282 and 297–315; these read VSAKNEAKSED and TEAK…PVSE.

This sequence belongs to the universal ribosomal protein uS2 family.

This is Small ribosomal subunit protein uS2 from Clavibacter michiganensis subsp. michiganensis (strain NCPPB 382).